A 347-amino-acid polypeptide reads, in one-letter code: S-adenosylmethionine decarboxylase proenzyme 4 (347 aa).

Catalysis depends on residues E7 and E10. E66 contacts substrate. Catalysis depends on S67, which acts as the Schiff-base intermediate with substrate; via pyruvic acid. S67 is subject to Pyruvic acid (Ser); by autocatalysis. The active-site Proton donor; for catalytic activity is C81. Active-site proton acceptor; for processing activity residues include S237 and H250. E254 provides a ligand contact to substrate.

It belongs to the eukaryotic AdoMetDC family. Pyruvate is required as a cofactor. Is synthesized initially as an inactive proenzyme. Formation of the active enzyme involves a self-maturation process in which the active site pyruvoyl group is generated from an internal serine residue via an autocatalytic post-translational modification. Two non-identical subunits are generated from the proenzyme in this reaction, and the pyruvate is formed at the N-terminus of the alpha chain, which is derived from the carboxyl end of the proenzyme. The post-translation cleavage follows an unusual pathway, termed non-hydrolytic serinolysis, in which the side chain hydroxyl group of the serine supplies its oxygen atom to form the C-terminus of the beta chain, while the remainder of the serine residue undergoes an oxidative deamination to produce ammonia and the pyruvoyl group blocking the N-terminus of the alpha chain.

The enzyme catalyses S-adenosyl-L-methionine + H(+) = S-adenosyl 3-(methylsulfanyl)propylamine + CO2. The protein operates within amine and polyamine biosynthesis; S-adenosylmethioninamine biosynthesis; S-adenosylmethioninamine from S-adenosyl-L-methionine: step 1/1. Functionally, essential for biosynthesis of the polyamines spermidine and spermine. Essential for polyamine homeostasis, and normal plant embryogenesis, growth and development. The polypeptide is S-adenosylmethionine decarboxylase proenzyme 4 (Arabidopsis thaliana (Mouse-ear cress)).